The chain runs to 236 residues: Cyclin-P3-1 (236 aa).

Belongs to the cyclin family. Cyclin U/P subfamily.

The protein is Cyclin-P3-1 (CYCP3-1) of Oryza sativa subsp. japonica (Rice).